Consider the following 206-residue polypeptide: 2,3-bisphosphoglycerate-dependent phosphoglycerate mutase (206 aa).

Substrate is bound by residues 9–16 (RHGQSEWN), 22–23 (TG), Arg61, 88–91 (ERDY), Lys99, 115–116 (RR), and 159–160 (GN). The active-site Tele-phosphohistidine intermediate is His10. The active-site Proton donor/acceptor is Glu88.

This sequence belongs to the phosphoglycerate mutase family. BPG-dependent PGAM subfamily. Homodimer.

It carries out the reaction (2R)-2-phosphoglycerate = (2R)-3-phosphoglycerate. Its pathway is carbohydrate degradation; glycolysis; pyruvate from D-glyceraldehyde 3-phosphate: step 3/5. Its function is as follows. Catalyzes the interconversion of 2-phosphoglycerate and 3-phosphoglycerate. The polypeptide is 2,3-bisphosphoglycerate-dependent phosphoglycerate mutase (Mesorhizobium japonicum (strain LMG 29417 / CECT 9101 / MAFF 303099) (Mesorhizobium loti (strain MAFF 303099))).